The following is a 291-amino-acid chain: Undecaprenyl-diphosphatase (291 aa).

8 helical membrane-spanning segments follow: residues 1-21 (MFIIELIKGIILGVVEGLTEF), 48-68 (SAFTFKIVIQLGSVFAAAWVF), 102-122 (LHVLVGMVPAGILGLLFDDFI), 126-146 (LFSVPTVMIGLFVGAIYMIIA), 162-182 (ISYFQAFVIGISQAVAMWPGF), 203-223 (SDFTFIMAVPIMLAASGLSLL), 231-251 (IADIPFYILGFLAAFTVGLIA), and 267-287 (FAIYRIVLVIFIAILYFGFGI).

This sequence belongs to the UppP family.

Its subcellular location is the cell membrane. It carries out the reaction di-trans,octa-cis-undecaprenyl diphosphate + H2O = di-trans,octa-cis-undecaprenyl phosphate + phosphate + H(+). In terms of biological role, catalyzes the dephosphorylation of undecaprenyl diphosphate (UPP). Confers resistance to bacitracin. The polypeptide is Undecaprenyl-diphosphatase (Staphylococcus aureus (strain USA300)).